Consider the following 397-residue polypeptide: Elongation factor Tu (397 aa).

The 198-residue stretch at 10–207 folds into the tr-type G domain; that stretch reads KPHVNIGTIG…ACDSYIEEPE (198 aa). A G1 region spans residues 19–26; the sequence is GHIDHGKT. 19 to 26 contacts GTP; the sequence is GHIDHGKT. T26 is a Mg(2+) binding site. The tract at residues 60-64 is G2; it reads GITIA. Residues 81 to 84 form a G3 region; the sequence is DCPG. Residues 81–85 and 136–139 each bind GTP; these read DCPGH and NKCD. A G4 region spans residues 136 to 139; sequence NKCD. Residues 174-176 are G5; it reads SAL.

This sequence belongs to the TRAFAC class translation factor GTPase superfamily. Classic translation factor GTPase family. EF-Tu/EF-1A subfamily. In terms of assembly, monomer.

It localises to the cytoplasm. It catalyses the reaction GTP + H2O = GDP + phosphate + H(+). In terms of biological role, GTP hydrolase that promotes the GTP-dependent binding of aminoacyl-tRNA to the A-site of ribosomes during protein biosynthesis. The chain is Elongation factor Tu from Maridesulfovibrio salexigens (strain ATCC 14822 / DSM 2638 / NCIMB 8403 / VKM B-1763) (Desulfovibrio salexigens).